The chain runs to 467 residues: Asparagine--tRNA ligase (467 aa).

The protein belongs to the class-II aminoacyl-tRNA synthetase family. Homodimer.

The protein localises to the cytoplasm. It catalyses the reaction tRNA(Asn) + L-asparagine + ATP = L-asparaginyl-tRNA(Asn) + AMP + diphosphate + H(+). This chain is Asparagine--tRNA ligase, found in Mannheimia succiniciproducens (strain KCTC 0769BP / MBEL55E).